A 547-amino-acid polypeptide reads, in one-letter code: Fumarate reductase (CoM/CoB) subunit A (547 aa).

It belongs to the FAD-dependent oxidoreductase 2 family. Subunit A of the heterodimeric fumarate reductase of methanogenic Archaea, composed of subunits A (TfrA) and B (TfrB). The cofactor is an oxidized flavin.

Its subcellular location is the cytoplasm. The catalysed reaction is coenzyme B + coenzyme M + fumarate = coenzyme M-coenzyme B heterodisulfide + succinate. In terms of biological role, catalyzes the reduction of fumarate with reduced coenzyme M (CoM-S-H) and coenzyme B (CoB-S-H). In vitro, is able to reduces fumarate with reduced benzyl viologen, oxidize CoM-S-H and CoB-S-H to CoM-S-S-CoB with methylene blue, and reduce CoM-S-S-CoB with reduced benzyl viologen. The enzyme has specificity for the two thiol compounds as the CoB--CoM heterodisulfide reductase. The enzyme is very sensitive to oxygen. This chain is Fumarate reductase (CoM/CoB) subunit A, found in Methanothermobacter marburgensis (strain ATCC BAA-927 / DSM 2133 / JCM 14651 / NBRC 100331 / OCM 82 / Marburg) (Methanobacterium thermoautotrophicum).